The sequence spans 430 residues: Tyrosine--tRNA ligase (430 aa).

Y36 contributes to the L-tyrosine binding site. The 'HIGH' region signature appears at 41 to 50; sequence PTASSLHVGS. 2 residues coordinate L-tyrosine: Y170 and Q174. The 'KMSKS' region motif lies at 230–234; the sequence is KMGKT. K233 is a binding site for ATP. One can recognise an S4 RNA-binding domain in the interval 362-427; the sequence is VPAFELFDEI…GKKNYHRLVL (66 aa).

It belongs to the class-I aminoacyl-tRNA synthetase family. TyrS type 1 subfamily. In terms of assembly, homodimer.

Its subcellular location is the cytoplasm. It carries out the reaction tRNA(Tyr) + L-tyrosine + ATP = L-tyrosyl-tRNA(Tyr) + AMP + diphosphate + H(+). Catalyzes the attachment of tyrosine to tRNA(Tyr) in a two-step reaction: tyrosine is first activated by ATP to form Tyr-AMP and then transferred to the acceptor end of tRNA(Tyr). The chain is Tyrosine--tRNA ligase from Desulfatibacillum aliphaticivorans.